Consider the following 182-residue polypeptide: NADH-dependent FAD reductase (182 aa).

D16 is a binding site for NAD(+). Residues 47–48 (NS), 62–64 (CVG), and H98 contribute to the FAD site. H143 is a binding site for NAD(+).

It belongs to the non-flavoprotein flavin reductase family. Homodimer.

The catalysed reaction is FADH2 + NAD(+) = FAD + NADH + 2 H(+). Its pathway is antibiotic biosynthesis. With respect to regulation, the SgcE6-SgcC hydroxylation activity decreases in the presence of excess FAD. Reductase component of a two-component system involved in the biosynthesis of the enediyne antitumor antibiotic C-1027. SgcE6 provides the FADH(2) required by both the halogenase SgcC3 and the monooxygenase SgcC through free diffusion. Accepts only NADH and FAD as substrates. In Streptomyces globisporus, this protein is NADH-dependent FAD reductase.